The primary structure comprises 478 residues: Protein FAM83E (478 aa).

The segment at 1 to 293 (MAASQLAALE…LYAASCPLPP (293 aa)) is DUF1669. Disordered regions lie at residues 292–334 (PPAP…PLAH), 359–436 (RART…LPPA), and 452–478 (DATFKLQEPRGVRPSDWAPRAGLGGQP). Basic residues predominate over residues 309-319 (RSPHRVSRRRS). The span at 379-388 (RLSQLSGSSD) shows a compositional bias: polar residues.

Belongs to the FAM83 family. As to quaternary structure, directly interacts (via DUF1669) with CSNK1A1, CSNK1A1L, CSNK1D and CSNK1E. May interact with RAF1.

Its subcellular location is the cytoplasm. The protein localises to the perinuclear region. In terms of biological role, may play a role in MAPK signaling. The sequence is that of Protein FAM83E from Homo sapiens (Human).